The chain runs to 458 residues: MVNLRNAVHSFLVHLIGLLVWQCDISVSPVAAIVTDIFNTSDGGRFKFPDGVQNWPALSIVVIIIMTIGGNILVIMAVSMEKKLHNATNYFLMSLAIADMLVGLLVMPLSLLAILYDYVWPLPRYLCPVWISLDVLFSTASIMHLCAISLDRYVAIRNPIEHSRFNSRTKAIMKIAIVWAISIGVSVPIPVIGLRDERKVFVNNTTCVLNDPNFVLIGSFVAFFIPLTIMVITYCLTIYVLRRQALMLLHGHTEEPPGLSLDFLKCCKRNTAEEENSANPNQDQNARRRKKKERRPRGTMQAINNERKASKVLGIVFFVFLIMWCPFFITNILSVLCEKSCNQKLMEKLLNVFVWIGYVCSGINPLVYTLFNKIYRRAFSNYLRCNYKVEKKPPVRQIPRVAATALSGRELNVNIYRHTNEPVIEKASDNEPGIEMQVENLELPVNPSSVVSERISSV.

Residues 1–32 form the signal peptide; that stretch reads MVNLRNAVHSFLVHLIGLLVWQCDISVSPVAA. Over 33–55 the chain is Extracellular; that stretch reads IVTDIFNTSDGGRFKFPDGVQNW. Residues 56–80 traverse the membrane as a helical segment; that stretch reads PALSIVVIIIMTIGGNILVIMAVSM. Over 81 to 86 the chain is Cytoplasmic; it reads EKKLHN. The chain crosses the membrane as a helical span at residues 87 to 111; that stretch reads ATNYFLMSLAIADMLVGLLVMPLSL. Residues 112–128 are Extracellular-facing; the sequence is LAILYDYVWPLPRYLCP. C127 and C207 form a disulfide bridge. A helical membrane pass occupies residues 129 to 151; sequence VWISLDVLFSTASIMHLCAISLD. Position 139 (T139) interacts with ergotamine. A DRY motif; important for ligand-induced conformation changes motif is present at residues 151–153; that stretch reads DRY. Over 152 to 167 the chain is Cytoplasmic; the sequence is RYVAIRNPIEHSRFNS. A helical transmembrane segment spans residues 168-189; it reads RTKAIMKIAIVWAISIGVSVPI. At 190–213 the chain is on the extracellular side; the sequence is PVIGLRDERKVFVNNTTCVLNDPN. Position 209 (L209) interacts with ergotamine. A helical transmembrane segment spans residues 214–236; it reads FVLIGSFVAFFIPLTIMVITYCL. The Cytoplasmic portion of the chain corresponds to 237-311; the sequence is TIYVLRRQAL…AINNERKASK (75 aa). Positions 274 to 301 are disordered; that stretch reads EENSANPNQDQNARRRKKKERRPRGTMQ. Basic residues predominate over residues 287 to 297; sequence RRRKKKERRPR. A helical membrane pass occupies residues 312-336; the sequence is VLGIVFFVFLIMWCPFFITNILSVL. An intrachain disulfide couples C337 to C341. Topologically, residues 337–347 are extracellular; that stretch reads CEKSCNQKLME. Residues 348 to 370 traverse the membrane as a helical segment; the sequence is KLLNVFVWIGYVCSGINPLVYTL. An NPxxY motif; important for ligand-induced conformation changes and signaling motif is present at residues 364–368; sequence NPLVY. Residues 371 to 458 lie on the Cytoplasmic side of the membrane; sequence FNKIYRRAFS…SVVSERISSV (88 aa). A PDZ-binding motif is present at residues 456–458; it reads SSV.

It belongs to the G-protein coupled receptor 1 family. As to quaternary structure, interacts with MPDZ. Interacts with ARRB2. Interacts with MPP3; this interaction stabilizes the receptor at the plasma membrane and prevents the desensitization of the HTR2C receptor-mediated calcium response.

It localises to the cell membrane. Functionally, G-protein coupled receptor for 5-hydroxytryptamine (serotonin). Also functions as a receptor for various drugs and psychoactive substances, including ergot alkaloid derivatives, 1-2,5,-dimethoxy-4-iodophenyl-2-aminopropane (DOI) and lysergic acid diethylamide (LSD). Ligand binding causes a conformation change that triggers signaling via guanine nucleotide-binding proteins (G proteins) and modulates the activity of downstream effectors. HTR2C is coupled to G(q)/G(11) G alpha proteins and activates phospholipase C-beta, releasing diacylglycerol (DAG) and inositol 1,4,5-trisphosphate (IP3) second messengers that modulate the activity of phosphatidylinositol 3-kinase and promote the release of Ca(2+) ions from intracellular stores, respectively. Beta-arrestin family members inhibit signaling via G proteins and mediate activation of alternative signaling pathways. Regulates neuronal activity via the activation of short transient receptor potential calcium channels in the brain, and thereby modulates the activation of pro-opiomelanocortin neurons and the release of CRH that then regulates the release of corticosterone. Plays a role in the regulation of appetite and eating behavior, responses to anxiogenic stimuli and stress. Plays a role in insulin sensitivity and glucose homeostasis. The chain is 5-hydroxytryptamine receptor 2C from Pan troglodytes (Chimpanzee).